The chain runs to 156 residues: Large ribosomal subunit protein uL15 (156 aa).

Basic and acidic residues predominate over residues 1–13; it reads MKLNEIKDNEGAT. A disordered region spans residues 1-41; sequence MKLNEIKDNEGATKNRKRLGRGIGSGSGKTAGRGVKGQKAR. Positions 21–35 are enriched in gly residues; the sequence is RGIGSGSGKTAGRGV.

The protein belongs to the universal ribosomal protein uL15 family. Part of the 50S ribosomal subunit.

In terms of biological role, binds to the 23S rRNA. This chain is Large ribosomal subunit protein uL15, found in Sinorhizobium medicae (strain WSM419) (Ensifer medicae).